The following is a 196-amino-acid chain: Dephospho-CoA kinase (196 aa).

A DPCK domain is found at 5-196 (IIGLTGGIAT…QVDIALNFEL (192 aa)). 13–18 (ATGKTT) is an ATP binding site.

This sequence belongs to the CoaE family.

It is found in the cytoplasm. It carries out the reaction 3'-dephospho-CoA + ATP = ADP + CoA + H(+). The protein operates within cofactor biosynthesis; coenzyme A biosynthesis; CoA from (R)-pantothenate: step 5/5. Its function is as follows. Catalyzes the phosphorylation of the 3'-hydroxyl group of dephosphocoenzyme A to form coenzyme A. The chain is Dephospho-CoA kinase from Trichormus variabilis (strain ATCC 29413 / PCC 7937) (Anabaena variabilis).